The sequence spans 394 residues: Phosphopentomutase (394 aa).

Mn(2+)-binding residues include Asp13, Asp286, His291, Asp327, His328, and His339.

The protein belongs to the phosphopentomutase family. Mn(2+) serves as cofactor.

It localises to the cytoplasm. It carries out the reaction 2-deoxy-alpha-D-ribose 1-phosphate = 2-deoxy-D-ribose 5-phosphate. The catalysed reaction is alpha-D-ribose 1-phosphate = D-ribose 5-phosphate. Its pathway is carbohydrate degradation; 2-deoxy-D-ribose 1-phosphate degradation; D-glyceraldehyde 3-phosphate and acetaldehyde from 2-deoxy-alpha-D-ribose 1-phosphate: step 1/2. Isomerase that catalyzes the conversion of deoxy-ribose 1-phosphate (dRib-1-P) and ribose 1-phosphate (Rib-1-P) to deoxy-ribose 5-phosphate (dRib-5-P) and ribose 5-phosphate (Rib-5-P), respectively. The chain is Phosphopentomutase from Bacillus mycoides (strain KBAB4) (Bacillus weihenstephanensis).